The sequence spans 146 residues: UPF0260 protein Swoo_2117 (146 aa).

It belongs to the UPF0260 family.

This is UPF0260 protein Swoo_2117 from Shewanella woodyi (strain ATCC 51908 / MS32).